A 338-amino-acid chain; its full sequence is MRVLGIETSCDETGIAVYDDKLGLLSHALYSQVKLHADYGGVVPELASRDHVRKIVPLIRQALKNADTKIADLDGIAYTKGPGLIGALLVGACVGRSLAFAWNKPAIGVHHMEGHLLAPMLEEDAPEFPFVALLVSGGHSMLVKVDGIGLYEVLGESVDDAAGEAFDKTAKLMGLDYPGGPRLAKLAATGVPAGYQFPRPMTDRPGLDFSFSGLKTFTANTIAAEPDDEQTRANIARAFEEAVVDTLAIKCRRALKLTGYNRLVIAGGVSANTRLRATLAEVMTSIGGKVYYPRGEFCTDNGAMIAYAGLQRLKAGQREDLAVKGQPRWPLDTLPPLF.

Positions 111 and 115 each coordinate Fe cation. Residues 134–138 (LVSGG), Asp167, Gly180, and Asn272 each bind substrate. Residue Asp300 coordinates Fe cation.

This sequence belongs to the KAE1 / TsaD family. Fe(2+) is required as a cofactor.

It localises to the cytoplasm. The catalysed reaction is L-threonylcarbamoyladenylate + adenosine(37) in tRNA = N(6)-L-threonylcarbamoyladenosine(37) in tRNA + AMP + H(+). Functionally, required for the formation of a threonylcarbamoyl group on adenosine at position 37 (t(6)A37) in tRNAs that read codons beginning with adenine. Is involved in the transfer of the threonylcarbamoyl moiety of threonylcarbamoyl-AMP (TC-AMP) to the N6 group of A37, together with TsaE and TsaB. TsaD likely plays a direct catalytic role in this reaction. The protein is tRNA N6-adenosine threonylcarbamoyltransferase of Shewanella putrefaciens (strain CN-32 / ATCC BAA-453).